Reading from the N-terminus, the 333-residue chain is D-fructose 1,6-bisphosphatase class 2/sedoheptulose 1,7-bisphosphatase (333 aa).

Residues Asp33, Glu57, Asp85, and Glu88 each coordinate Mn(2+). Residues 88-90, Tyr119, 164-166, and 186-188 contribute to the substrate site; these read EGT, RAR, and DGD. Residue Glu213 participates in Mn(2+) binding.

It belongs to the FBPase class 2 family. In terms of assembly, homotetramer. Requires Mn(2+) as cofactor.

The enzyme catalyses beta-D-fructose 1,6-bisphosphate + H2O = beta-D-fructose 6-phosphate + phosphate. It catalyses the reaction D-sedoheptulose 1,7-bisphosphate + H2O = D-sedoheptulose 7-phosphate + phosphate. Its pathway is carbohydrate biosynthesis; Calvin cycle. Its function is as follows. Catalyzes the hydrolysis of fructose 1,6-bisphosphate (Fru 1,6-P2) and sedoheptulose 1,7-bisphosphate (Sed 1,7-P2) to fructose 6-phosphate and sedoheptulose 7-phosphate, respectively. This is D-fructose 1,6-bisphosphatase class 2/sedoheptulose 1,7-bisphosphatase from Prochlorococcus marinus subsp. pastoris (strain CCMP1986 / NIES-2087 / MED4).